Here is a 680-residue protein sequence, read N- to C-terminus: Extracellular matrix protein 2 (680 aa).

The first 20 residues, 1 to 20 (MKFSSLYCFLLLLIFQTDFG), serve as a signal peptide directing secretion. The VWFC domain maps to 100–157 (GHCLANGMIMYNKAVWSPEPCTTCLCLNGKVLCDETKCHPQMCPQTIIPEGECCPVCS). The segment covering 189–198 (QLEEDEEEVK) has biased composition (acidic residues). Residues 189–293 (QLEEDEEEVK…RLPIPATPRG (105 aa)) are disordered. The span at 223 to 238 (QSREGKAQRPEEEGRQ) shows a compositional bias: basic and acidic residues. A compositionally biased stretch (acidic residues) spans 249–272 (NEEDDDEEEEDDDDEEEDDDDEDE). The Cell attachment site signature appears at 275 to 277 (RGD). The region spanning 288-325 (PATPRGIPSLPSMCSLSYKTISCISADLTQIPPLTAPE) is the LRRNT domain. 13 LRR repeats span residues 349-369 (NLER…GPKA), 375-396 (NLMR…LPST), 397-417 (LEEL…SLSD), 420-440 (QLVT…NSLA), 446-466 (SLSY…GLPA), 467-488 (SIEE…SFNH), 491-511 (KINV…APLA), 517-538 (NLES…LPKS), 539-559 (LVHL…VFGH), 563-583 (GLEY…DRVS), 590-611 (SLRE…VQEM), 613-634 (ALHF…QICN), and 642-665 (NLQH…AFSC). N-linked (GlcNAc...) asparagine glycosylation is present at Asn359. Asn430 carries N-linked (GlcNAc...) asparagine glycosylation. Residue Asn487 is glycosylated (N-linked (GlcNAc...) asparagine).

The protein belongs to the small leucine-rich proteoglycan (SLRP) family. SLRP class I subfamily. In terms of assembly, interacts with numerous extracellular matrix proteins. Interacts with MSL1 and RASSF1.

Its subcellular location is the secreted. It is found in the extracellular space. The protein localises to the extracellular matrix. Functionally, promotes matrix assembly and cell adhesiveness. The chain is Extracellular matrix protein 2 (ECM2) from Bos taurus (Bovine).